A 281-amino-acid polypeptide reads, in one-letter code: Hexaprenyl pyrophosphate synthase (281 aa).

3 residues coordinate isopentenyl diphosphate: K42, R45, and H74. Mg(2+) is bound by residues D81 and D85. R91 contributes to the isopentenyl diphosphate binding site.

It belongs to the FPP/GGPP synthase family. In terms of assembly, homodimer. It depends on Mg(2+) as a cofactor.

It catalyses the reaction 2 isopentenyl diphosphate + (2E,6E,10E)-geranylgeranyl diphosphate = all-trans-hexaprenyl diphosphate + 2 diphosphate. Functionally, catalyzes consecutive E-type condensation of two isopentenyl pyrophosphate (IPP) molecules with an allylic substrate such as geranylgeranyl diphosphate (GGPP), farnesyl diphosphate (FPP) or geranyl diphosphate (GPP) to yield the medium-chain product trans-C30-hexaprenyl pyrophosphate (HexPP). GGPP is the physiological substrate. This Saccharolobus solfataricus (strain ATCC 35092 / DSM 1617 / JCM 11322 / P2) (Sulfolobus solfataricus) protein is Hexaprenyl pyrophosphate synthase (gdS-2).